Here is a 712-residue protein sequence, read N- to C-terminus: Cyclomaltodextrin glucanotransferase (712 aa).

The first 27 residues, 1–27 (MKRFMKLTAVWTLWLSLTLGLLSPVHA), serve as a signal peptide directing secretion. The A1 stretch occupies residues 28-165 (APDTSVSNKQ…NIKVIIDFAP (138 aa)). Ca(2+) contacts are provided by Asp-54, Asn-56, Asn-59, and Asn-60. An intrachain disulfide couples Cys-70 to Cys-77. Positions 78 and 80 each coordinate Ca(2+). 127 to 128 (YW) is a substrate binding site. Asn-166 is a binding site for Ca(2+). The segment at 166-229 (NHTSPASSDD…NLYDLADLNH (64 aa)) is b. Residue His-167 participates in substrate binding. Ile-217 lines the Ca(2+) pocket. 220-223 (NLYD) serves as a coordination point for substrate. Asp-226 contacts Ca(2+). Residues 230-433 (NNSSVDVYLK…LRKSNPAIAY (204 aa)) are A2. Arg-254 is a binding site for substrate. The active-site Nucleophile is Asp-256. 259-260 (KH) provides a ligand contact to substrate. His-260 lines the Ca(2+) pocket. Glu-284 (proton donor) is an active-site residue. His-354, Asp-398, and Arg-402 together coordinate substrate. The c stretch occupies residues 434–522 (GSTQERWINN…GTAVWQYTTD (89 aa)). The interval 523–608 (ATAPINGNVG…SNIYDNFEVL (86 aa)) is d. Positions 526–606 (PINGNVGPMM…AASNIYDNFE (81 aa)) constitute an IPT/TIG domain. A CBM20 domain is found at 607–712 (VLTGDQVTVR…TATVNVNWQP (106 aa)). The interval 609–712 (TGDQVTVRFV…TATVNVNWQP (104 aa)) is e.

The protein belongs to the glycosyl hydrolase 13 family. As to quaternary structure, monomer. Ca(2+) serves as cofactor.

It is found in the secreted. The catalysed reaction is Cyclizes part of a (1-&gt;4)-alpha-D-glucan chain by formation of a (1-&gt;4)-alpha-D-glucosidic bond.. This Bacillus sp. (strain 38-2) protein is Cyclomaltodextrin glucanotransferase (cgt).